The sequence spans 477 residues: Homospermidine synthase (477 aa).

The protein belongs to the saccharopine dehydrogenase family. As to quaternary structure, homodimer. It depends on NAD(+) as a cofactor.

It catalyses the reaction 2 putrescine = sym-homospermidine + NH4(+). The catalysed reaction is putrescine + spermidine = sym-homospermidine + propane-1,3-diamine. In terms of biological role, involved in the NAD(+)-dependent synthesis of the polyamine homospermidine from putrescine. The protein is Homospermidine synthase (hss) of Blastochloris viridis (Rhodopseudomonas viridis).